The primary structure comprises 736 residues: Catalase-peroxidase (736 aa).

Over residues 1-10 (MDAKTDDKGA) the composition is skewed to basic and acidic residues. The segment at 1-26 (MDAKTDDKGAGKCPFSGGSHGHRNRD) is disordered. Positions 96–218 (WHSAGTYRIT…LGAVQMGLIY (123 aa)) form a cross-link, tryptophyl-tyrosyl-methioninium (Trp-Tyr) (with M-244). The Proton acceptor role is filled by H97. Residues 218 to 244 (YVNPEGPNGNPDPVAAAKDIRETFARM) constitute a cross-link (tryptophyl-tyrosyl-methioninium (Tyr-Met) (with W-96)). A heme b-binding site is contributed by H259.

The protein belongs to the peroxidase family. Peroxidase/catalase subfamily. Homodimer or homotetramer. The cofactor is heme b. Post-translationally, formation of the three residue Trp-Tyr-Met cross-link is important for the catalase, but not the peroxidase activity of the enzyme.

It carries out the reaction H2O2 + AH2 = A + 2 H2O. The catalysed reaction is 2 H2O2 = O2 + 2 H2O. Bifunctional enzyme with both catalase and broad-spectrum peroxidase activity. This is Catalase-peroxidase from Rhodopseudomonas palustris (strain ATCC BAA-98 / CGA009).